A 263-amino-acid polypeptide reads, in one-letter code: 3-methyl-2-oxobutanoate hydroxymethyltransferase (263 aa).

Mg(2+) is bound by residues Asp-45 and Asp-84. 3-methyl-2-oxobutanoate is bound by residues 45 to 46, Asp-84, and Lys-112; that span reads DS. Glu-114 contacts Mg(2+). Glu-180 serves as the catalytic Proton acceptor.

It belongs to the PanB family. Homodecamer; pentamer of dimers. It depends on Mg(2+) as a cofactor.

The protein localises to the cytoplasm. It catalyses the reaction 3-methyl-2-oxobutanoate + (6R)-5,10-methylene-5,6,7,8-tetrahydrofolate + H2O = 2-dehydropantoate + (6S)-5,6,7,8-tetrahydrofolate. It functions in the pathway cofactor biosynthesis; (R)-pantothenate biosynthesis; (R)-pantoate from 3-methyl-2-oxobutanoate: step 1/2. In terms of biological role, catalyzes the reversible reaction in which hydroxymethyl group from 5,10-methylenetetrahydrofolate is transferred onto alpha-ketoisovalerate to form ketopantoate. In Citrobacter koseri (strain ATCC BAA-895 / CDC 4225-83 / SGSC4696), this protein is 3-methyl-2-oxobutanoate hydroxymethyltransferase.